Here is a 179-residue protein sequence, read N- to C-terminus: Large ribosomal subunit protein uL5 (179 aa).

This sequence belongs to the universal ribosomal protein uL5 family. Part of the 50S ribosomal subunit; part of the 5S rRNA/L5/L18/L25 subcomplex. Contacts the 5S rRNA and the P site tRNA. Forms a bridge to the 30S subunit in the 70S ribosome.

This is one of the proteins that bind and probably mediate the attachment of the 5S RNA into the large ribosomal subunit, where it forms part of the central protuberance. In the 70S ribosome it contacts protein S13 of the 30S subunit (bridge B1b), connecting the 2 subunits; this bridge is implicated in subunit movement. Contacts the P site tRNA; the 5S rRNA and some of its associated proteins might help stabilize positioning of ribosome-bound tRNAs. The protein is Large ribosomal subunit protein uL5 of Anoxybacillus flavithermus (strain DSM 21510 / WK1).